Reading from the N-terminus, the 246-residue chain is 3-deoxy-manno-octulosonate cytidylyltransferase (246 aa).

This sequence belongs to the KdsB family.

It localises to the cytoplasm. The catalysed reaction is 3-deoxy-alpha-D-manno-oct-2-ulosonate + CTP = CMP-3-deoxy-beta-D-manno-octulosonate + diphosphate. Its pathway is nucleotide-sugar biosynthesis; CMP-3-deoxy-D-manno-octulosonate biosynthesis; CMP-3-deoxy-D-manno-octulosonate from 3-deoxy-D-manno-octulosonate and CTP: step 1/1. It participates in bacterial outer membrane biogenesis; lipopolysaccharide biosynthesis. Activates KDO (a required 8-carbon sugar) for incorporation into bacterial lipopolysaccharide in Gram-negative bacteria. In Bradyrhizobium sp. (strain ORS 278), this protein is 3-deoxy-manno-octulosonate cytidylyltransferase.